We begin with the raw amino-acid sequence, 83 residues long: MNKNTQDKGTPAALQVFLLPQYNRYSAEMTRHVPLLCNLFSMSRYVLRHLTAQIILERMSAACVCLRRRRQSEFTDPTEKIGE.

This is an uncharacterized protein from Treponema pallidum (strain Nichols).